A 1107-amino-acid chain; its full sequence is Ubiquitin-associated protein 2-like (1107 aa).

Residue Met-1 is modified to N-acetylmethionine. The disordered stretch occupies residues Met-1–Ala-33. Residues Asp-49–Gly-89 enclose the UBA domain. The disordered stretch occupies residues Asp-92–Glu-229. Basic and acidic residues predominate over residues Glu-118–Arg-132. Basic residues predominate over residues Arg-133–Ser-145. Asymmetric dimethylarginine is present on residues Arg-187 and Arg-190. Low complexity predominate over residues Asn-213–Gly-226. A phosphoserine mark is found at Ser-376, Ser-380, and Ser-436. Thr-445 bears the Phosphothreonine mark. 3 disordered regions span residues Ala-461–Ser-513, Ser-550–Leu-676, and Ala-689–Gly-814. A phosphoserine mark is found at Ser-474, Ser-487, Ser-490, Ser-491, and Ser-497. Composition is skewed to low complexity over residues Gln-494–Leu-505 and Ser-554–Ser-589. The segment covering Gly-590–Glu-656 has biased composition (polar residues). Phosphoserine occurs at positions 624, 625, 628, and 629. Low complexity predominate over residues Ser-665–Ser-675. A compositionally biased stretch (polar residues) spans Ala-689–His-713. The segment covering Ser-714 to Ser-804 has biased composition (low complexity). Ser-872 and Ser-879 each carry phosphoserine. Disordered stretches follow at residues Phe-885–Ala-921 and Gln-1060–Asn-1107. 2 stretches are compositionally biased toward low complexity: residues Pro-893–Thr-916 and Gln-1073–Ser-1087. The segment covering Ile-1088–Asn-1107 has biased composition (polar residues).

In terms of assembly, interacts with BMI1. Part of a complex consisting of UBAP2L, BMI1 and RNF2. Interacts with G3BP1 (via NTF2 domain); promoting stress granule formation.

It localises to the nucleus. The protein localises to the chromosome. Its subcellular location is the cytoplasm. The protein resides in the stress granule. Its function is as follows. Recruits the ubiquitination machinery to RNA polymerase II for polyubiquitination, removal and degradation, when the transcription-coupled nucleotide excision repair (TC-NER) machinery fails to resolve DNA damage. Plays an important role in the activity of long-term repopulating hematopoietic stem cells (LT-HSCs). Is a regulator of stress granule assembly, required for their efficient formation. Required for proper brain development and neocortex lamination. In Mus musculus (Mouse), this protein is Ubiquitin-associated protein 2-like.